A 96-amino-acid polypeptide reads, in one-letter code: Acetolactate synthase isozyme 1 small subunit (96 aa).

One can recognise an ACT domain in the interval 10–83 (ILELTVRNHP…DVVKVQRNQS (74 aa)).

This sequence belongs to the acetolactate synthase small subunit family. In terms of assembly, dimer of large and small chains.

It carries out the reaction 2 pyruvate + H(+) = (2S)-2-acetolactate + CO2. The protein operates within amino-acid biosynthesis; L-isoleucine biosynthesis; L-isoleucine from 2-oxobutanoate: step 1/4. It participates in amino-acid biosynthesis; L-valine biosynthesis; L-valine from pyruvate: step 1/4. This is Acetolactate synthase isozyme 1 small subunit (ilvN) from Escherichia coli O157:H7.